The chain runs to 619 residues: Cationic amino acid transporter 3 (619 aa).

The Cytoplasmic portion of the chain corresponds to 1-36; the sequence is MLWQALRRFGQKLVRRRLLELGMGETRLARCLSTLD. A helical transmembrane segment spans residues 37–57; that stretch reads LVALGVGSTLGAGVYVLAGEV. Residues 58 to 61 lie on the Extracellular side of the membrane; that stretch reads AKEK. Residues 62-82 form a helical membrane-spanning segment; the sequence is AGPSIVICFLVAALSSVLAGL. The Cytoplasmic portion of the chain corresponds to 83–107; sequence CYAEFGARVPGSGSAYLYSYVTVGE. Residues 108–128 traverse the membrane as a helical segment; the sequence is LWAFTTGWNLILSYVIGTASV. At 129 to 162 the chain is on the extracellular side; that stretch reads ARAWSSAFDNLIGNHISQTLKGTILLNMPHVLAE. Residues 163-183 traverse the membrane as a helical segment; sequence YPDFFALALVLLLTGLLVLGA. At 184–191 the chain is on the cytoplasmic side; it reads NESGLVTK. Residues 192 to 212 traverse the membrane as a helical segment; it reads VFTGMNLLVLGFVIISGFIKG. The Extracellular portion of the chain corresponds to 213 to 244; it reads ELRNWKLTKEDYCLTMSESNGTCSLDSMGSGG. Asn-232 carries an N-linked (GlcNAc...) asparagine glycan. A helical transmembrane segment spans residues 245–265; it reads FMPFGLEGILRGAATCFYAFV. Over 266 to 285 the chain is Cytoplasmic; the sequence is GFDCIATTGEEAQNPQRSIP. A helical membrane pass occupies residues 286-306; sequence MGIVISLSICFLAYFGVSSAL. Residues 307-335 lie on the Extracellular side of the membrane; that stretch reads TLMMPYYKLQPESPLPEAFTYVGWEPARY. Residues 336 to 356 traverse the membrane as a helical segment; sequence LVAIGSLCALSTSLLGSMFPM. Over 357–382 the chain is Cytoplasmic; that stretch reads PRVIYAMAEDGLLFRVLARVHNGTHT. The helical transmembrane segment at 383–403 threads the bilayer; that stretch reads PIVATVVSGVIAAFMAFLFEL. Residues 404–406 lie on the Extracellular side of the membrane; that stretch reads TDL. The helical transmembrane segment at 407 to 427 threads the bilayer; it reads VDLMSIGTLLAYSLVSICVLI. Residues 428 to 475 are Cytoplasmic-facing; sequence LRYQPDQEMKNGEEEVELQEERTLEAEKLTVQALFCQVDSIPTLLSGR. A helical transmembrane segment spans residues 476 to 496; it reads IVYVCSSLLAVLLTVLCLVLT. Residues 497–507 are Extracellular-facing; the sequence is WWTTPLHSGDP. A helical transmembrane segment spans residues 508-528; the sequence is VWVTVVVLILGLILGISGVIW. Topologically, residues 529-540 are cytoplasmic; sequence RQPQNRTPLHFK. The helical transmembrane segment at 541–561 threads the bilayer; the sequence is VPVVPLLPLVSIFVNVYLMMQ. The Extracellular segment spans residues 562–569; it reads MTADTWAR. The helical transmembrane segment at 570–590 threads the bilayer; the sequence is FGVWMLIGFAIYFGYGIQHSV. Over 591 to 619 the chain is Cytoplasmic; it reads EEVKNHQTLPKTRPQTIDLDLTTSCVHSI. The residue at position 606 (Thr-606) is a Phosphothreonine. Phosphoserine is present on Ser-618.

Belongs to the amino acid-polyamine-organocation (APC) superfamily. Cationic amino acid transporter (CAT) (TC 2.A.3.3) family. In terms of processing, N-glycosylated. Highly expressed in brain.

Its subcellular location is the cell membrane. It catalyses the reaction L-arginine(in) = L-arginine(out). The catalysed reaction is L-lysine(in) = L-lysine(out). The enzyme catalyses L-ornithine(in) = L-ornithine(out). Inhibited by high potassium ions-induced membrane depolarization. In terms of biological role, uniporter that mediates the uptake of cationic L-amino acids such as L-arginine, L-lysine and L-ornithine. The transport is sodium ions- and pH-independent, moderately trans-stimulated and is mediated by passive diffusion. This chain is Cationic amino acid transporter 3, found in Rattus norvegicus (Rat).